The primary structure comprises 372 residues: MLSVWNLPVEQQPQQQQQQQQNIINSSNNINSINSALDNILNTTSKGIQLPRFNLLNTSSSGFLTNSNDTLFLENNNNNNNNINQQLNKSVLNSSNKQLDIIKTINEISNEHKSFQPFEITPIKPQSTSTNTYNTEFGVINQNTFVLDSNKIEELRVDTSVLDPLLSLPYNIINNTTNNNNNNNNNNNNNNNNNNSNNNNSNNNNINNNNNKSNTPMKKESTIRNSNSTFEKFESPTLSTTFGLNKEELNTFTTTDMNNYVKQANMVKELSQVEKKELKRQKRLIKNRESAHLSRQRKRERLTDLEHRVEELSSNSIDINKTLSSLENENLILKAEVGQLFEVINDSPVLSALFYKIASLSQQPQKDTIGAY.

Disordered regions lie at residues 1–20 (MLSV…QQQQ) and 176–234 (TTNN…EKFE). Low complexity-rich tracts occupy residues 11 to 20 (QQPQQQQQQQ) and 176 to 215 (TTNN…KSNT). Over residues 223–234 (IRNSNSTFEKFE) the composition is skewed to polar residues. A bZIP domain is found at 277 to 340 (ELKRQKRLIK…LILKAEVGQL (64 aa)). Residues 279 to 301 (KRQKRLIKNRESAHLSRQRKRER) are basic motif. The leucine-zipper stretch occupies residues 305-340 (LEHRVEELSSNSIDINKTLSSLENENLILKAEVGQL).

Belongs to the bZIP family.

The protein resides in the nucleus. Probable transcriptional regulator. This is Probable basic-leucine zipper transcription factor G (bzpG) from Dictyostelium discoideum (Social amoeba).